The sequence spans 279 residues: MEDQYEKKITWTIKNFSFVQSQAIDSDIFVVGDSKWHLVAYPKGNGESTNKCLSLYLNVADFQSLPNGWKRHIKYRLTVVNQMSEKLSEQEVIQGWFYKNFHISGFQTMLPLSKLLDKNGGFLVNGDVKIVVEVGVLEVVGKSDVLEETLLVHESIDINGFQVLPSQVESVNNLFEKHPDIVSEFRSKNPLMRTTYLNDLLCLTEILCESSEELSTGDMANAYSTLTCLKKAGFKLDWLEKKLKEVCEARVQEIDEEWKDLTDLKENWSSDDEDDLNRL.

The MATH domain occupies 6–134 (EKKITWTIKN…NGDVKIVVEV (129 aa)). Residues 235 to 271 (KLDWLEKKLKEVCEARVQEIDEEWKDLTDLKENWSSD) are a coiled coil.

In Arabidopsis thaliana (Mouse-ear cress), this protein is MATH domain and coiled-coil domain-containing protein At1g31390.